The chain runs to 216 residues: Orotidine 5'-phosphate decarboxylase (216 aa).

Substrate is bound by residues aspartate 12, lysine 34, 62–71, serine 119, 172–182, glycine 194, and arginine 195; these read DFKVADIDAT and PGVGFQGGNAK. Lysine 64 acts as the Proton donor in catalysis.

It belongs to the OMP decarboxylase family. Type 1 subfamily. As to quaternary structure, homodimer.

It catalyses the reaction orotidine 5'-phosphate + H(+) = UMP + CO2. The protein operates within pyrimidine metabolism; UMP biosynthesis via de novo pathway; UMP from orotate: step 2/2. Functionally, catalyzes the decarboxylation of orotidine 5'-monophosphate (OMP) to uridine 5'-monophosphate (UMP). This is Orotidine 5'-phosphate decarboxylase from Methanosphaera stadtmanae (strain ATCC 43021 / DSM 3091 / JCM 11832 / MCB-3).